The chain runs to 234 residues: DNA repair protein RecO (234 aa).

This sequence belongs to the RecO family.

Its function is as follows. Involved in DNA repair and RecF pathway recombination. The protein is DNA repair protein RecO of Idiomarina loihiensis (strain ATCC BAA-735 / DSM 15497 / L2-TR).